Reading from the N-terminus, the 512-residue chain is Rab11 family-interacting protein 2 (512 aa).

Residues 1 to 120 (MMLSEQAQKW…DKQRRKTEWF (120 aa)) enclose the C2 domain. The necessary for its cellular translocation to the plasma membrane stretch occupies residues 15-102 (VQVTVLQAKD…GLDKFLGQVA (88 aa)). 2 disordered regions span residues 169 to 239 (DKMK…MSSE) and 262 to 285 (VPES…KMNQ). Polar residues predominate over residues 178–188 (GTFSDTSSAII). Over residues 226–236 (HSMSDLSGSHM) the composition is skewed to low complexity. Ser227 is modified (phosphoserine; by MARK2). The residue at position 277 (Ser277) is a Phosphoserine. Residues 323–325 (NPF) carry the NPF 1 motif. Basic and acidic residues predominate over residues 361–374 (ERVTGKKDSRRSDK). The interval 361–392 (ERVTGKKDSRRSDKLNNGGSDSPCDLKSPNAF) is disordered. Short sequence motifs (NPF) lie at residues 406-408 (NPF) and 440-442 (NPF). Residues 437 to 499 (PDSNPFDATA…EETPSILRVP (63 aa)) form the FIP-RBD domain. A necessary for interaction with AP2A1, RAB11A, subcellular location, endocytosis activity and homooligomerization region spans residues 465–512 (ELLRRKDTHIRELEDYIDNLLVRVMEETPSILRVPYEPSRKAGKFSNS).

As to quaternary structure, homooligomerizes in a Rab11-independent manner. Forms a heterooligomeric complex with RAB11FIP4. Interacts with AP2A1, MYO5B, RAB25 and REPS1. Interacts with RAB11A and RAB11B (activated GTP-bound form). Interacts with NPC1L1. Interacts (via NPF motifs) with EHD1 and EHD3. Interacts with TICAM2; this interaction directs RAB11FIP2 to the phagosome. Interacts with RAB14 and RAB25 (GTP-bound forms). Post-translationally, phosphorylation at Ser-227 by MARK2 regulates epithelial cell polarity.

It localises to the cell projection. The protein localises to the phagocytic cup. Its subcellular location is the cell membrane. It is found in the recycling endosome membrane. In terms of biological role, a Rab11 effector binding preferentially phosphatidylinositol 3,4,5-trisphosphate (PtdInsP3) and phosphatidic acid (PA) and acting in the regulation of the transport of vesicles from the endosomal recycling compartment (ERC) to the plasma membrane. Involved in insulin granule exocytosis. Also involved in receptor-mediated endocytosis and membrane trafficking of recycling endosomes, probably originating from clathrin-coated vesicles. Required in a complex with MYO5B and RAB11 for the transport of NPC1L1 to the plasma membrane. Also acts as a regulator of cell polarity. Plays an essential role in phagocytosis through a mechanism involving TICAM2, RAC1 and CDC42 Rho GTPases for controlling actin-dynamics. The sequence is that of Rab11 family-interacting protein 2 (RAB11FIP2) from Homo sapiens (Human).